We begin with the raw amino-acid sequence, 152 residues long: 3-hydroxyacyl-[acyl-carrier-protein] dehydratase FabZ (152 aa).

Histidine 57 is a catalytic residue.

The protein belongs to the thioester dehydratase family. FabZ subfamily.

Its subcellular location is the cytoplasm. The enzyme catalyses a (3R)-hydroxyacyl-[ACP] = a (2E)-enoyl-[ACP] + H2O. Functionally, involved in unsaturated fatty acids biosynthesis. Catalyzes the dehydration of short chain beta-hydroxyacyl-ACPs and long chain saturated and unsaturated beta-hydroxyacyl-ACPs. The chain is 3-hydroxyacyl-[acyl-carrier-protein] dehydratase FabZ from Pasteurella multocida (strain Pm70).